Consider the following 256-residue polypeptide: Large ribosomal subunit protein eL8B (256 aa).

A disordered region spans residues 1-37 (MAPGKKVAPAPFGAKSTKSNKAKNPLTHSTPKNFGIG).

This sequence belongs to the eukaryotic ribosomal protein eL8 family. In terms of assembly, component of the large ribosomal subunit (LSU). Mature yeast ribosomes consist of a small (40S) and a large (60S) subunit. The 40S small subunit contains 1 molecule of ribosomal RNA (18S rRNA) and 33 different proteins (encoded by 57 genes). The large 60S subunit contains 3 rRNA molecules (25S, 5.8S and 5S rRNA) and 46 different proteins (encoded by 81 genes).

Its subcellular location is the cytoplasm. Component of the ribosome, a large ribonucleoprotein complex responsible for the synthesis of proteins in the cell. The small ribosomal subunit (SSU) binds messenger RNAs (mRNAs) and translates the encoded message by selecting cognate aminoacyl-transfer RNA (tRNA) molecules. The large subunit (LSU) contains the ribosomal catalytic site termed the peptidyl transferase center (PTC), which catalyzes the formation of peptide bonds, thereby polymerizing the amino acids delivered by tRNAs into a polypeptide chain. The nascent polypeptides leave the ribosome through a tunnel in the LSU and interact with protein factors that function in enzymatic processing, targeting, and the membrane insertion of nascent chains at the exit of the ribosomal tunnel. This is Large ribosomal subunit protein eL8B from Saccharomyces cerevisiae (strain ATCC 204508 / S288c) (Baker's yeast).